The primary structure comprises 137 residues: Fluoride-specific ion channel FluC 1 (137 aa).

Transmembrane regions (helical) follow at residues 4 to 24, 37 to 57, 67 to 87, and 98 to 118; these read LIYIIVGIAGILGALSRYYLG, LATLLINLAGCFLLAWLTTYI, VITGIGTGFIGSFTTFSTLSV, and WGIAFLYVSCSILGGLIMSGL. Na(+)-binding residues include glycine 77 and threonine 80.

The protein belongs to the fluoride channel Fluc/FEX (TC 1.A.43) family.

It localises to the cell membrane. It carries out the reaction fluoride(in) = fluoride(out). Its activity is regulated as follows. Na(+) is not transported, but it plays an essential structural role and its presence is essential for fluoride channel function. Fluoride-specific ion channel. Important for reducing fluoride concentration in the cell, thus reducing its toxicity. This chain is Fluoride-specific ion channel FluC 1, found in Bacillus anthracis.